The sequence spans 1153 residues: ATP-dependent helicase/deoxyribonuclease subunit B (1153 aa).

8–15 (GRAGSGKS) is a binding site for ATP. Residues Cys-786, Cys-1104, Cys-1107, and Cys-1113 each contribute to the [4Fe-4S] cluster site.

Belongs to the helicase family. AddB/RexB type 1 subfamily. As to quaternary structure, heterodimer of AddA and AddB. It depends on Mg(2+) as a cofactor. [4Fe-4S] cluster serves as cofactor.

In terms of biological role, the heterodimer acts as both an ATP-dependent DNA helicase and an ATP-dependent, dual-direction single-stranded exonuclease. Recognizes the chi site generating a DNA molecule suitable for the initiation of homologous recombination. The AddB subunit has 5' -&gt; 3' nuclease activity but not helicase activity. This Clostridium acetobutylicum (strain ATCC 824 / DSM 792 / JCM 1419 / IAM 19013 / LMG 5710 / NBRC 13948 / NRRL B-527 / VKM B-1787 / 2291 / W) protein is ATP-dependent helicase/deoxyribonuclease subunit B.